Reading from the N-terminus, the 136-residue chain is Cytidine deaminase (136 aa).

The CMP/dCMP-type deaminase domain maps to 1 to 128 (MDVEKLIAES…KLLPGAFSKE (128 aa)). 42–44 (NIE) serves as a coordination point for substrate. Cysteine 53 provides a ligand contact to Zn(2+). The active-site Proton donor is glutamate 55. 2 residues coordinate Zn(2+): cysteine 86 and cysteine 89.

The protein belongs to the cytidine and deoxycytidylate deaminase family. Requires Zn(2+) as cofactor.

The catalysed reaction is cytidine + H2O + H(+) = uridine + NH4(+). The enzyme catalyses 2'-deoxycytidine + H2O + H(+) = 2'-deoxyuridine + NH4(+). This enzyme scavenges exogenous and endogenous cytidine and 2'-deoxycytidine for UMP synthesis. The protein is Cytidine deaminase (cdd) of Sporosarcina psychrophila (Bacillus psychrophilus).